The primary structure comprises 92 residues: C-C motif chemokine 4 (92 aa).

An N-terminal signal peptide occupies residues 1–23 (MKLGVTVLSVALLVAALCPPALS). 2 disulfide bridges follow: cysteine 34–cysteine 58 and cysteine 35–cysteine 74.

It belongs to the intercrine beta (chemokine CC) family. In terms of assembly, homodimer.

It is found in the secreted. Monokine with inflammatory and chemokinetic properties. This is C-C motif chemokine 4 (CCL4) from Oryctolagus cuniculus (Rabbit).